Reading from the N-terminus, the 88-residue chain is MGRSLRKGPFVDHSLIKKVRAMNLLEKKAPIKTWSRRSMITPEMIGHTFEVHNGKKFLTVFVSETMVGHKLGEFSPTRMFKSHPVKKG.

Belongs to the universal ribosomal protein uS19 family.

In terms of biological role, protein S19 forms a complex with S13 that binds strongly to the 16S ribosomal RNA. This is Small ribosomal subunit protein uS19 from Chlamydia felis (strain Fe/C-56) (Chlamydophila felis).